The chain runs to 824 residues: Leucine--tRNA ligase (824 aa).

Positions 42–52 (PYPSGHLHMGH) match the 'HIGH' region motif. Positions 581 to 585 (KMSKS) match the 'KMSKS' region motif. An ATP-binding site is contributed by Lys584.

Belongs to the class-I aminoacyl-tRNA synthetase family.

It is found in the cytoplasm. The enzyme catalyses tRNA(Leu) + L-leucine + ATP = L-leucyl-tRNA(Leu) + AMP + diphosphate. This is Leucine--tRNA ligase from Syntrophomonas wolfei subsp. wolfei (strain DSM 2245B / Goettingen).